We begin with the raw amino-acid sequence, 710 residues long: Polyribonucleotide nucleotidyltransferase (710 aa).

Mg(2+)-binding residues include D489 and D495. One can recognise a KH domain in the interval 556–615 (PKIDTIKIDVDKIKVVIGKGGETIDKIIAETGVKIDIDDEGNVSIYSSDQAAINRTKEII). One can recognise an S1 motif domain in the interval 625-693 (GEVYHAKVVR…EKGRVDASMK (69 aa)). Residues 691 to 710 (SMKALIPRPPKPEKKEEKHD) form a disordered region. A compositionally biased stretch (basic and acidic residues) spans 700-710 (PKPEKKEEKHD).

Mg(2+) is required as a cofactor.

Its subcellular location is the cytoplasm. It carries out the reaction RNA(n+1) + phosphate = RNA(n) + a ribonucleoside 5'-diphosphate. Its function is as follows. Involved in mRNA degradation. Catalyzes the phosphorolysis of single-stranded polyribonucleotides processively in the 3'- to 5'-direction. This chain is Polyribonucleotide nucleotidyltransferase, found in Streptococcus pyogenes serotype M6 (strain ATCC BAA-946 / MGAS10394).